A 296-amino-acid chain; its full sequence is 4-hydroxy-tetrahydrodipicolinate synthase (296 aa).

Position 45 (threonine 45) interacts with pyruvate. The Proton donor/acceptor role is filled by tyrosine 133. Lysine 161 serves as the catalytic Schiff-base intermediate with substrate. Isoleucine 203 lines the pyruvate pocket.

It belongs to the DapA family. Homotetramer; dimer of dimers.

Its subcellular location is the cytoplasm. The enzyme catalyses L-aspartate 4-semialdehyde + pyruvate = (2S,4S)-4-hydroxy-2,3,4,5-tetrahydrodipicolinate + H2O + H(+). It participates in amino-acid biosynthesis; L-lysine biosynthesis via DAP pathway; (S)-tetrahydrodipicolinate from L-aspartate: step 3/4. Functionally, catalyzes the condensation of (S)-aspartate-beta-semialdehyde [(S)-ASA] and pyruvate to 4-hydroxy-tetrahydrodipicolinate (HTPA). The polypeptide is 4-hydroxy-tetrahydrodipicolinate synthase (Idiomarina loihiensis (strain ATCC BAA-735 / DSM 15497 / L2-TR)).